The sequence spans 140 residues: ATP synthase epsilon chain (140 aa).

It belongs to the ATPase epsilon chain family. In terms of assembly, F-type ATPases have 2 components, CF(1) - the catalytic core - and CF(0) - the membrane proton channel. CF(1) has five subunits: alpha(3), beta(3), gamma(1), delta(1), epsilon(1). CF(0) has three main subunits: a, b and c.

The protein localises to the cell inner membrane. In terms of biological role, produces ATP from ADP in the presence of a proton gradient across the membrane. This chain is ATP synthase epsilon chain, found in Bordetella bronchiseptica (strain ATCC BAA-588 / NCTC 13252 / RB50) (Alcaligenes bronchisepticus).